We begin with the raw amino-acid sequence, 308 residues long: uncharacterized protein (308 aa).

2 stretches are compositionally biased toward polar residues: residues 138–148 and 205–229; these read WSFTKHGSNTP and STSH…QPPS. Disordered stretches follow at residues 138-157 and 205-235; these read WSFT…PLCN and STSH…TDAS.

Its subcellular location is the cytoplasm. This is an uncharacterized protein from Schizosaccharomyces pombe (strain 972 / ATCC 24843) (Fission yeast).